Reading from the N-terminus, the 237-residue chain is tRNA1(Val) (adenine(37)-N6)-methyltransferase (237 aa).

It belongs to the methyltransferase superfamily. tRNA (adenine-N(6)-)-methyltransferase family.

It is found in the cytoplasm. The catalysed reaction is adenosine(37) in tRNA1(Val) + S-adenosyl-L-methionine = N(6)-methyladenosine(37) in tRNA1(Val) + S-adenosyl-L-homocysteine + H(+). In terms of biological role, specifically methylates the adenine in position 37 of tRNA(1)(Val) (anticodon cmo5UAC). This is tRNA1(Val) (adenine(37)-N6)-methyltransferase from Parabacteroides distasonis (strain ATCC 8503 / DSM 20701 / CIP 104284 / JCM 5825 / NCTC 11152).